Here is a 334-residue protein sequence, read N- to C-terminus: Testis-specific Y-encoded protein 1 (334 aa).

Ser-4 is subject to Phosphoserine. Disordered stretches follow at residues 27–46 (LEGE…PAGD) and 96–146 (NEGE…AERR). 2 stretches are compositionally biased toward basic and acidic residues: residues 96-108 (NEGE…KQEG) and 115-128 (ELEK…DSKD).

The protein belongs to the nucleosome assembly protein (NAP) family. In terms of processing, phosphorylated. As to expression, testis.

It is found in the cytoplasm. The protein resides in the nucleus. Functionally, may be involved in sperm differentiation and proliferation. The chain is Testis-specific Y-encoded protein 1 (Tspy1) from Rattus norvegicus (Rat).